Reading from the N-terminus, the 424-residue chain is Glucose-1-phosphate adenylyltransferase (424 aa).

Residues tyrosine 112, glycine 177, 192–193, and serine 210 each bind alpha-D-glucose 1-phosphate; that span reads EK.

Belongs to the bacterial/plant glucose-1-phosphate adenylyltransferase family. In terms of assembly, homotetramer.

It catalyses the reaction alpha-D-glucose 1-phosphate + ATP + H(+) = ADP-alpha-D-glucose + diphosphate. It participates in glycan biosynthesis; glycogen biosynthesis. Functionally, involved in the biosynthesis of ADP-glucose, a building block required for the elongation reactions to produce glycogen. Catalyzes the reaction between ATP and alpha-D-glucose 1-phosphate (G1P) to produce pyrophosphate and ADP-Glc. The sequence is that of Glucose-1-phosphate adenylyltransferase from Methylococcus capsulatus (strain ATCC 33009 / NCIMB 11132 / Bath).